The following is a 149-amino-acid chain: Protegrin-3 (149 aa).

The signal sequence occupies residues 1-29; it reads METQRASLCLGRWSLWLLLLALVVPSASA. A propeptide spanning residues 30–130 is cleaved from the precursor; that stretch reads QALSYREAVL…DITCNEVQGV (101 aa). The tract at residues 61–80 is disordered; it reads DQPPKADEDPGTPKPVSFTV. Disulfide bonds link cysteine 85/cysteine 96, cysteine 107/cysteine 124, cysteine 136/cysteine 145, and cysteine 138/cysteine 143. Position 148 is an arginine amide (arginine 148).

This sequence belongs to the cathelicidin family.

The protein resides in the secreted. Microbicidal activity. Active against E.coli, Listeria monocytogenes and C.albicans, in vitro. In Sus scrofa (Pig), this protein is Protegrin-3 (NPG3).